An 87-amino-acid chain; its full sequence is MSYYSGYSGGLGYGYGSSFGGPGCGCNSIRRLGCGSGYGGFGYGSGYGGYGYGSDYGGYGYGSSYGGYGCGCRRPSCCGRYGFSNFY.

The interval 6–72 (GYSGGLGYGY…SSYGGYGCGC (67 aa)) is 21 X 2 AA repeats of G-[YCGS].

It belongs to the KRTAP type 19 family. In terms of assembly, interacts with hair keratins. In terms of tissue distribution, strong expression in narrowly defined pattern restricted to the lower and middle cortical regions of the hair shaft in both developing and cycling hair. During hair follicle regression (catagen), expression levels decrease until expression is no longer detectable in follicles at resting stage (telogen).

Its function is as follows. In the hair cortex, hair keratin intermediate filaments are embedded in an interfilamentous matrix, consisting of hair keratin-associated proteins (KRTAP), which are essential for the formation of a rigid and resistant hair shaft through their extensive disulfide bond cross-linking with abundant cysteine residues of hair keratins. The matrix proteins include the high-sulfur and high-glycine-tyrosine keratins. The protein is Keratin-associated protein 19-1 (Krtap19-1) of Mus musculus (Mouse).